The primary structure comprises 293 residues: Ribosomal protein L11 methyltransferase (293 aa).

The S-adenosyl-L-methionine site is built by threonine 145, glycine 166, aspartate 188, and asparagine 230.

This sequence belongs to the methyltransferase superfamily. PrmA family.

The protein localises to the cytoplasm. The enzyme catalyses L-lysyl-[protein] + 3 S-adenosyl-L-methionine = N(6),N(6),N(6)-trimethyl-L-lysyl-[protein] + 3 S-adenosyl-L-homocysteine + 3 H(+). In terms of biological role, methylates ribosomal protein L11. This chain is Ribosomal protein L11 methyltransferase, found in Shewanella halifaxensis (strain HAW-EB4).